The primary structure comprises 343 residues: Heat-inducible transcription repressor HrcA (343 aa).

It belongs to the HrcA family.

Negative regulator of class I heat shock genes (grpE-dnaK-dnaJ and groELS operons). Prevents heat-shock induction of these operons. The sequence is that of Heat-inducible transcription repressor HrcA from Alkaliphilus metalliredigens (strain QYMF).